Reading from the N-terminus, the 207-residue chain is Early nodulin-like protein 11 (207 aa).

Residues 1 to 24 (MVSLISIVSVVFLLFTTFYHFGEA) form the signal peptide. The region spanning 25–130 (RIINVGGSLD…GEKVTVVVQS (106 aa)) is the Phytocyanin domain. Residue Asn43 is glycosylated (N-linked (GlcNAc...) asparagine). A disulfide bridge links Cys83 with Cys118. The segment at 129-179 (QSPNHPKPGPAAVTPTLPPKPSTTPAAPAPAPPTPSPKSSTSTMAPAPAPA) is disordered. The span at 144 to 164 (TLPPKPSTTPAAPAPAPPTPS) shows a compositional bias: pro residues. A compositionally biased stretch (low complexity) spans 165–179 (PKSSTSTMAPAPAPA). Ser181 is lipidated: GPI-anchor amidated serine. The propeptide at 182–207 (SAVGLVAGNGIFWASTLVAVIGLAFA) is removed in mature form.

Belongs to the early nodulin-like (ENODL) family. In terms of tissue distribution, confined to flowers and siliques.

Its subcellular location is the cell membrane. May act as a carbohydrate transporter. Required, together with ENODL11, ENODL12, ENODL13, ENODL14 and ENODL15, for male-female communication and pollen tube reception and burst at the synergid cell surface of the female gametophyte. In Arabidopsis thaliana (Mouse-ear cress), this protein is Early nodulin-like protein 11.